The primary structure comprises 26 residues: Maculatin-3.1 (26 aa).

Residue A26 is modified to Alanine amide.

As to expression, expressed by the skin dorsal glands.

The protein localises to the secreted. In terms of biological role, shows antibacterial activity against S.uberis. The polypeptide is Maculatin-3.1 (Ranoidea genimaculata (Brown-spotted tree frog)).